A 230-amino-acid polypeptide reads, in one-letter code: UPF0494 membrane protein PB2B2.14c (230 aa).

3 helical membrane-spanning segments follow: residues 78-98 (WPLL…NFEV), 120-140 (IWGP…GLIY), and 148-168 (AIPL…VAMV).

Belongs to the UPF0494 family.

It is found in the membrane. The polypeptide is UPF0494 membrane protein PB2B2.14c (Schizosaccharomyces pombe (strain 972 / ATCC 24843) (Fission yeast)).